The sequence spans 248 residues: Proteasome subunit alpha type-5 (248 aa).

It belongs to the peptidase T1A family. In terms of assembly, the 26S proteasome consists of a 20S proteasome core and two 19S regulatory subunits. The 20S proteasome core is composed of 28 subunits that are arranged in four stacked rings, resulting in a barrel-shaped structure. The two end rings are each formed by seven alpha subunits, and the two central rings are each formed by seven beta subunits. The catalytic chamber with the active sites is on the inside of the barrel.

It localises to the cytoplasm. Its subcellular location is the nucleus. The proteasome is a multicatalytic proteinase complex which is characterized by its ability to cleave peptides with Arg, Phe, Tyr, Leu, and Glu adjacent to the leaving group at neutral or slightly basic pH. The proteasome has an ATP-dependent proteolytic activity. The polypeptide is Proteasome subunit alpha type-5 (pas-5) (Caenorhabditis elegans).